Consider the following 131-residue polypeptide: Dihydroneopterin aldolase 2 (131 aa).

Residues E29, Y61, and 80–81 (LE) contribute to the substrate site. The active-site Proton donor/acceptor is the K107.

The protein belongs to the DHNA family. Homooctamer. Forms a hollow cylinder assembled from two ring-shaped tetramers. As to expression, expressed in roots, leaves, stems and siliques.

The catalysed reaction is 7,8-dihydroneopterin = 6-hydroxymethyl-7,8-dihydropterin + glycolaldehyde. The protein operates within cofactor biosynthesis; tetrahydrofolate biosynthesis; 2-amino-4-hydroxy-6-hydroxymethyl-7,8-dihydropteridine diphosphate from 7,8-dihydroneopterin triphosphate: step 3/4. Its function is as follows. Catalyzes the conversion of 7,8-dihydroneopterin into 6-hydroxymethyl-7,8-dihydropterin, a biosynthetic precursor of the vitamin tetrahydrofolate. Can use L-threo-dihydroneopterin and D-erythro-dihydroneopterin as substrates for the formation of 6-hydroxymethyldihydropterin, but it can also catalyze the epimerization of carbon 2' of dihydroneopterin and dihydromonapterin. This Arabidopsis thaliana (Mouse-ear cress) protein is Dihydroneopterin aldolase 2.